A 694-amino-acid polypeptide reads, in one-letter code: Beta-galactosidase (694 aa).

The tract at residues M1–G31 is disordered. Over residues S22–G31 the composition is skewed to polar residues. 2 residues coordinate substrate: R144 and N182. E183 serves as the catalytic Proton donor. Residue E341 is the Nucleophile of the active site. Residues W349 and E389–H392 contribute to the substrate site.

The protein belongs to the glycosyl hydrolase 42 family. As to quaternary structure, homotrimer.

The catalysed reaction is Hydrolysis of terminal non-reducing beta-D-galactose residues in beta-D-galactosides.. Its activity is regulated as follows. Strongly inhibited by glucose. No activity is lost during treatment with 100 mM EDTA after 2 hours. Activity not considerably affected by metal ions (5 mM), including Na(+), K(+), Mg(2+), Co(2+) and Ca(2+). Completely inhibited by Cu(2+) and Zn(2+) (5 mM) and is strongly inhibited by Mn(2+) (11%), Fe(2+) (25%) and Ni(2+) (38%) in comparison with the activity in the absence of cations (100%). Activity not affected by dithiothreitol, beta-mercaptoethanol and L-cysteine whereas reduced glutathione almost completely inactivates it. With ONPG as substrate, the addition of ethanol up to 20% still slightly stimulates activity. The activity increases up to 120% in the presence of 8% v/v ethanol at pH 5.5. Hydrolyzes p-nitrophenyl-beta-D-galactopyranoside (PNPG), o-nitrophenyl-beta-D-galactopyranoside (ONPG) and chromogen 5-bromo-4-chloro-3-indolyl-beta-D-galactopyranoside (X-gal), with highest activity against PNPG. Also acts on p-nitrophenyl-beta-D-glucopyranoside (PNPGlu) and o-nitrophenyl-beta-D-glucopyranoside (ONPGlu), but with significantly lower activity. This Arthrobacter sp protein is Beta-galactosidase.